The chain runs to 588 residues: Protein kintoun (588 aa).

Disordered stretches follow at residues 199 to 223 (PGYE…PENS), 338 to 498 (PPLE…SSQE), and 510 to 535 (AANV…ADED). Residues 202–212 (EAKEPPEERDL) are compositionally biased toward basic and acidic residues. The span at 350–361 (PNPTSDPQNENQ) shows a compositional bias: polar residues. Basic and acidic residues-rich tracts occupy residues 362–382 (TRVE…HQRG) and 393–433 (QVLE…KFEL). A compositionally biased stretch (polar residues) spans 435–447 (DVQQENKGNCSNT). The span at 448–460 (KEVKCCRRTKDSL) shows a compositional bias: basic and acidic residues.

It belongs to the PIH1 family. Kintoun subfamily.

It is found in the cytoplasm. The protein localises to the dynein axonemal particle. Required for cytoplasmic pre-assembly of axonemal dyneins, thereby playing a central role in motility in cilia and flagella. Involved in pre-assembly of dynein arm complexes in the cytoplasm before intraflagellar transport loads them for the ciliary compartment. This is Protein kintoun from Oryzias latipes (Japanese rice fish).